The chain runs to 364 residues: Acetylserotonin O-methyltransferase 1 (364 aa).

Residues G208, D231, D251, and K265 each coordinate S-adenosyl-L-homocysteine. H269 acts as the Proton acceptor in catalysis. Active-site residues include E300 and E330.

Belongs to the class I-like SAM-binding methyltransferase superfamily. Cation-independent O-methyltransferase family. In terms of assembly, homodimer. As to expression, expressed in leaves, stems and flowers.

It localises to the cytoplasm. The enzyme catalyses N-acetylserotonin + S-adenosyl-L-methionine = melatonin + S-adenosyl-L-homocysteine + H(+). Its pathway is aromatic compound metabolism; melatonin biosynthesis; melatonin from serotonin: step 1/2. Its function is as follows. Methyltransferase which catalyzes the transfer of a methyl group onto N-acetylserotonin, producing melatonin (N-acetyl-5-methoxytryptamine). This chain is Acetylserotonin O-methyltransferase 1, found in Oryza sativa subsp. japonica (Rice).